Consider the following 1368-residue polypeptide: DNA-directed RNA polymerase subunit beta (1368 aa).

It belongs to the RNA polymerase beta chain family. In terms of assembly, the RNAP catalytic core consists of 2 alpha, 1 beta, 1 beta' and 1 omega subunit. When a sigma factor is associated with the core the holoenzyme is formed, which can initiate transcription.

It carries out the reaction RNA(n) + a ribonucleoside 5'-triphosphate = RNA(n+1) + diphosphate. Its function is as follows. DNA-dependent RNA polymerase catalyzes the transcription of DNA into RNA using the four ribonucleoside triphosphates as substrates. The polypeptide is DNA-directed RNA polymerase subunit beta (Cupriavidus necator (strain ATCC 17699 / DSM 428 / KCTC 22496 / NCIMB 10442 / H16 / Stanier 337) (Ralstonia eutropha)).